A 264-amino-acid chain; its full sequence is Thymidylate synthase (264 aa).

DUMP-binding positions include R21 and 126-127 (RR). C146 (nucleophile) is an active-site residue. DUMP is bound by residues 166 to 169 (RSAD), N177, and 207 to 209 (HLY). D169 provides a ligand contact to (6R)-5,10-methylene-5,6,7,8-tetrahydrofolate. A263 serves as a coordination point for (6R)-5,10-methylene-5,6,7,8-tetrahydrofolate.

This sequence belongs to the thymidylate synthase family. Bacterial-type ThyA subfamily. As to quaternary structure, homodimer.

The protein localises to the cytoplasm. It carries out the reaction dUMP + (6R)-5,10-methylene-5,6,7,8-tetrahydrofolate = 7,8-dihydrofolate + dTMP. It participates in pyrimidine metabolism; dTTP biosynthesis. Catalyzes the reductive methylation of 2'-deoxyuridine-5'-monophosphate (dUMP) to 2'-deoxythymidine-5'-monophosphate (dTMP) while utilizing 5,10-methylenetetrahydrofolate (mTHF) as the methyl donor and reductant in the reaction, yielding dihydrofolate (DHF) as a by-product. This enzymatic reaction provides an intracellular de novo source of dTMP, an essential precursor for DNA biosynthesis. This chain is Thymidylate synthase, found in Afipia carboxidovorans (strain ATCC 49405 / DSM 1227 / KCTC 32145 / OM5) (Oligotropha carboxidovorans).